The following is a 458-amino-acid chain: MALWGGRFTQQADQQFKYFNDSLRFDYRLALQDIDGSIGWAKAIHSVGIINQAELVELIAALKQLRAEVAPNLAIVLQEDAEDIHSWVELQLIKKVGDLGKKLHTGRSRNDQVAVDMKLWCKAQVLSLQESIRALQEKLVETAEANQLSVMPGYTHLQRAQPITFAHWCMAYYEMLERDYSRLTDAYKRMNTCPLGSGALAGTAYAIDRDLLAQDLGFETATRNSLDSVSDRDHVLELLAAASISMMHLSRFAEDLIIFNSGESHFVELSDRVTSGSSLMPQKKNPDACELVRGKTGRVFGALSGLLATLKGLPLAYNKDMQEDKEGIFDAIETWQACVNISALVLEDIKVDTERTKEAAQQGYANATELADYLVAKGIPFREAHHIVGEAVVYAISQKKALEELNLDKFKQFHSVINDDVYPILSLDSCLTKRCAKGGVNLERVAEAIAAAKQNLNQ.

Belongs to the lyase 1 family. Argininosuccinate lyase subfamily.

It is found in the cytoplasm. It carries out the reaction 2-(N(omega)-L-arginino)succinate = fumarate + L-arginine. The protein operates within amino-acid biosynthesis; L-arginine biosynthesis; L-arginine from L-ornithine and carbamoyl phosphate: step 3/3. This Glaesserella parasuis serovar 5 (strain SH0165) (Haemophilus parasuis) protein is Argininosuccinate lyase.